Here is a 50-residue protein sequence, read N- to C-terminus: Protein hunchback (50 aa).

3 C2H2-type zinc fingers span residues 1–5, 11–33, and 39–50; these read HIRNH, FKCN…LKSH, and YRCADCAYATKY.

The protein belongs to the hunchback C2H2-type zinc-finger protein family.

Its subcellular location is the nucleus. Gap class segmentation protein that controls development of head structures. The polypeptide is Protein hunchback (hb) (Schultesia lampyridiformis (Firefly mimic roach)).